A 264-amino-acid chain; its full sequence is MNATTPAHRPQLHIDTRGQGPDLVMLHGWGVNSAVFTPLHEQLSEYRVHYVDLPGFGLSQPIAGDLSTWVDALIHALPANAIWAGWSLGGLVATQAAIRYPSHIQGLITIASSPCFMAREEEAWPGIPPQVLSMFGEQLGQNLPKTIERFLAIQAMGSETAKDDIKQLRDLVLARPLPDAAALTQGLDMLNQIDLRPQLSAIQQPWLRIWGRLDGLVPKRVQPQMPTANHITDVMLAKASHAPFVSHMEEFLQAITPWLAQFKD.

Residues 23 to 244 (LVMLHGWGVN…MLAKASHAPF (222 aa)) enclose the AB hydrolase-1 domain. Residues tryptophan 29, 87–88 (SL), and 150–154 (FLAIQ) each bind substrate. Serine 87 functions as the Nucleophile in the catalytic mechanism. Active-site residues include aspartate 214 and histidine 241. Histidine 241 serves as a coordination point for substrate.

This sequence belongs to the AB hydrolase superfamily. Carboxylesterase BioH family. Monomer.

The protein resides in the cytoplasm. The enzyme catalyses 6-carboxyhexanoyl-[ACP] methyl ester + H2O = 6-carboxyhexanoyl-[ACP] + methanol + H(+). Its pathway is cofactor biosynthesis; biotin biosynthesis. In terms of biological role, the physiological role of BioH is to remove the methyl group introduced by BioC when the pimeloyl moiety is complete. It allows to synthesize pimeloyl-ACP via the fatty acid synthetic pathway through the hydrolysis of the ester bonds of pimeloyl-ACP esters. In Shewanella sp. (strain MR-7), this protein is Pimeloyl-[acyl-carrier protein] methyl ester esterase.